Reading from the N-terminus, the 509-residue chain is Lysine--tRNA ligase (509 aa).

Residues E418 and E425 each contribute to the Mg(2+) site.

It belongs to the class-II aminoacyl-tRNA synthetase family. As to quaternary structure, homodimer. Mg(2+) is required as a cofactor.

Its subcellular location is the cytoplasm. The enzyme catalyses tRNA(Lys) + L-lysine + ATP = L-lysyl-tRNA(Lys) + AMP + diphosphate. This chain is Lysine--tRNA ligase, found in Acinetobacter baumannii (strain ATCC 17978 / DSM 105126 / CIP 53.77 / LMG 1025 / NCDC KC755 / 5377).